The following is a 102-amino-acid chain: Small ribosomal subunit protein uS10 (102 aa).

It belongs to the universal ribosomal protein uS10 family. As to quaternary structure, part of the 30S ribosomal subunit.

Its function is as follows. Involved in the binding of tRNA to the ribosomes. The chain is Small ribosomal subunit protein uS10 from Streptococcus uberis (strain ATCC BAA-854 / 0140J).